We begin with the raw amino-acid sequence, 921 residues long: Translation initiation factor IF-2 (921 aa).

Residues 1-296 form a disordered region; sequence MADQNTPGDK…PGPQKQRGRL (296 aa). Residues 80–89 show a composition bias toward low complexity; the sequence is RPSGPRPSGG. Residues 117-183 show a composition bias toward basic and acidic residues; that stretch reads ARVRDLEERR…AKKRFGEGEA (67 aa). Low complexity-rich tracts occupy residues 184 to 237 and 248 to 257; these read PRPA…ARPA and GRAPAAVAAG. The tr-type G domain occupies 417-586; sequence PRSPVVTVMG…MIALQADILD (170 aa). Positions 426–433 are G1; sequence GHVDHGKT. 426 to 433 is a GTP binding site; that stretch reads GHVDHGKT. Residues 451–455 are G2; it reads GITQH. The interval 474 to 477 is G3; the sequence is DTPG. Residues 474-478 and 528-531 contribute to the GTP site; these read DTPGH and NKID. Positions 528–531 are G4; that stretch reads NKID. The G5 stretch occupies residues 564–566; sequence SAK.

Belongs to the TRAFAC class translation factor GTPase superfamily. Classic translation factor GTPase family. IF-2 subfamily.

It is found in the cytoplasm. In terms of biological role, one of the essential components for the initiation of protein synthesis. Protects formylmethionyl-tRNA from spontaneous hydrolysis and promotes its binding to the 30S ribosomal subunits. Also involved in the hydrolysis of GTP during the formation of the 70S ribosomal complex. The chain is Translation initiation factor IF-2 from Bradyrhizobium sp. (strain ORS 278).